Consider the following 115-residue polypeptide: U3-lycotoxin-Ls1v (115 aa).

An N-terminal signal peptide occupies residues 1–20 (MKFVLLFGVLLVTLFSHSSA). Positions 21 to 44 (EMLDDFDQADEDELLSLIEKEEAR) are excised as a propeptide. 4 disulfides stabilise this stretch: cysteine 48-cysteine 63, cysteine 55-cysteine 72, cysteine 62-cysteine 87, and cysteine 74-cysteine 85.

Belongs to the neurotoxin 19 (CSTX) family. 01 subfamily. In terms of tissue distribution, expressed by the venom gland.

The protein localises to the secreted. The sequence is that of U3-lycotoxin-Ls1v from Lycosa singoriensis (Wolf spider).